Here is a 212-residue protein sequence, read N- to C-terminus: Redox-sensing transcriptional repressor Rex (212 aa).

Positions 17–56 (LYYRIFKRFNTDGIEKASSKQIADALGIDSATVRRDFSYF) form a DNA-binding region, H-T-H motif. 91-96 (GCGNIG) is a binding site for NAD(+).

This sequence belongs to the transcriptional regulatory Rex family. As to quaternary structure, homodimer.

It localises to the cytoplasm. Its function is as follows. Modulates transcription in response to changes in cellular NADH/NAD(+) redox state. This Streptococcus agalactiae serotype III (strain NEM316) protein is Redox-sensing transcriptional repressor Rex.